The sequence spans 1125 residues: Transcription-repair-coupling factor (1125 aa).

Positions 597 to 758 constitute a Helicase ATP-binding domain; sequence DMMSFKVMDR…LIKLRDISVL (162 aa). Position 610–617 (610–617) interacts with ATP; it reads GDVGFGKT. Residues 711 to 714 carry the DEEQ box motif; it reads DEEQ. The 160-residue stretch at 774–933 folds into the Helicase C-terminal domain; it reads SFSELLIKHA…GFKIAMKDME (160 aa).

It in the N-terminal section; belongs to the UvrB family. The protein in the C-terminal section; belongs to the helicase family. RecG subfamily.

The protein localises to the cytoplasm. Functionally, couples transcription and DNA repair by recognizing RNA polymerase (RNAP) stalled at DNA lesions. Mediates ATP-dependent release of RNAP and its truncated transcript from the DNA, and recruitment of nucleotide excision repair machinery to the damaged site. This is Transcription-repair-coupling factor from Borreliella burgdorferi (strain ATCC 35210 / DSM 4680 / CIP 102532 / B31) (Borrelia burgdorferi).